We begin with the raw amino-acid sequence, 177 residues long: Large ribosomal subunit protein uL6 (177 aa).

Belongs to the universal ribosomal protein uL6 family. Part of the 50S ribosomal subunit.

This protein binds to the 23S rRNA, and is important in its secondary structure. It is located near the subunit interface in the base of the L7/L12 stalk, and near the tRNA binding site of the peptidyltransferase center. This Agrobacterium fabrum (strain C58 / ATCC 33970) (Agrobacterium tumefaciens (strain C58)) protein is Large ribosomal subunit protein uL6.